The chain runs to 231 residues: Enolase-phosphatase E1 (231 aa).

Residues D11 and E13 each contribute to the Mg(2+) site. Residues 125–126 (SS) and K162 contribute to the substrate site. D188 contacts Mg(2+).

This sequence belongs to the HAD-like hydrolase superfamily. MasA/MtnC family. As to quaternary structure, monomer. The cofactor is Mg(2+).

The protein localises to the cytoplasm. The protein resides in the nucleus. It catalyses the reaction 5-methylsulfanyl-2,3-dioxopentyl phosphate + H2O = 1,2-dihydroxy-5-(methylsulfanyl)pent-1-en-3-one + phosphate. It functions in the pathway amino-acid biosynthesis; L-methionine biosynthesis via salvage pathway; L-methionine from S-methyl-5-thio-alpha-D-ribose 1-phosphate: step 3/6. Its pathway is amino-acid biosynthesis; L-methionine biosynthesis via salvage pathway; L-methionine from S-methyl-5-thio-alpha-D-ribose 1-phosphate: step 4/6. Its function is as follows. Bifunctional enzyme that catalyzes the enolization of 2,3-diketo-5-methylthiopentyl-1-phosphate (DK-MTP-1-P) into the intermediate 2-hydroxy-3-keto-5-methylthiopentenyl-1-phosphate (HK-MTPenyl-1-P), which is then dephosphorylated to form the acireductone 1,2-dihydroxy-3-keto-5-methylthiopentene (DHK-MTPene). This Pyricularia oryzae (strain 70-15 / ATCC MYA-4617 / FGSC 8958) (Rice blast fungus) protein is Enolase-phosphatase E1.